The chain runs to 164 residues: Phosphopantetheine adenylyltransferase (164 aa).

Thr10 contacts substrate. ATP contacts are provided by residues 10–11 (TF) and His18. 3 residues coordinate substrate: Lys42, Thr79, and Arg93. Residues 94–96 (GLR), Glu104, and 129–135 (NQIISSR) contribute to the ATP site.

The protein belongs to the bacterial CoaD family. As to quaternary structure, homohexamer. The cofactor is Mg(2+).

The protein resides in the cytoplasm. It catalyses the reaction (R)-4'-phosphopantetheine + ATP + H(+) = 3'-dephospho-CoA + diphosphate. Its pathway is cofactor biosynthesis; coenzyme A biosynthesis; CoA from (R)-pantothenate: step 4/5. Functionally, reversibly transfers an adenylyl group from ATP to 4'-phosphopantetheine, yielding dephospho-CoA (dPCoA) and pyrophosphate. In Pelagibacter ubique (strain HTCC1062), this protein is Phosphopantetheine adenylyltransferase.